Here is a 309-residue protein sequence, read N- to C-terminus: Aspartate carbamoyltransferase catalytic subunit (309 aa).

Carbamoyl phosphate contacts are provided by arginine 55 and threonine 56. Lysine 85 contributes to the L-aspartate binding site. Carbamoyl phosphate contacts are provided by arginine 106, histidine 135, and glutamine 138. 2 residues coordinate L-aspartate: arginine 168 and arginine 230. The carbamoyl phosphate site is built by leucine 268 and proline 269.

This sequence belongs to the aspartate/ornithine carbamoyltransferase superfamily. ATCase family. Heterododecamer (2C3:3R2) of six catalytic PyrB chains organized as two trimers (C3), and six regulatory PyrI chains organized as three dimers (R2).

The enzyme catalyses carbamoyl phosphate + L-aspartate = N-carbamoyl-L-aspartate + phosphate + H(+). Its pathway is pyrimidine metabolism; UMP biosynthesis via de novo pathway; (S)-dihydroorotate from bicarbonate: step 2/3. Functionally, catalyzes the condensation of carbamoyl phosphate and aspartate to form carbamoyl aspartate and inorganic phosphate, the committed step in the de novo pyrimidine nucleotide biosynthesis pathway. This Photobacterium profundum (strain SS9) protein is Aspartate carbamoyltransferase catalytic subunit.